The primary structure comprises 386 residues: Zinc finger CCCH domain-containing protein 39 (386 aa).

Positions 1–90 are disordered; the sequence is MDSSYSDSRP…SSSNPWMVPS (90 aa). Residues 20 to 37 show a composition bias toward polar residues; that stretch reads WNQTQMIDSMANPMNNEQ. Low complexity predominate over residues 43-58; the sequence is LSESQSQSQPSQQLQP. Residues 72–85 show a composition bias toward polar residues; that stretch reads NPASSFPQPSSSNP. The segment at 104–131 adopts a C3H1-type 1 zinc-finger fold; that stretch reads FYKTRMCAKFRAGTCRNGELCNFAHGIE. The disordered stretch occupies residues 136–166; the sequence is PPSNWQEIVGPPPAGQDRERERERERERERP. Basic and acidic residues predominate over residues 151-166; sequence QDRERERERERERERP. 2 C3H1-type zinc fingers span residues 183-211 and 269-297; these read ILRMKLCRKFCFGEECPYGDRCNFIHEDL and YWKTRLCMKFDITGQCPFGDKCHFAHGQA.

The protein is Zinc finger CCCH domain-containing protein 39 of Arabidopsis thaliana (Mouse-ear cress).